We begin with the raw amino-acid sequence, 374 residues long: tRNA-specific 2-thiouridylase MnmA (374 aa).

Residues 13 to 20 and methionine 39 contribute to the ATP site; that span reads GMSGGVDS. Residues 99-101 are interaction with target base in tRNA; that stretch reads NPD. Catalysis depends on cysteine 104, which acts as the Nucleophile. A disulfide bridge connects residues cysteine 104 and cysteine 201. Position 128 (glycine 128) interacts with ATP. An interaction with tRNA region spans residues 151 to 153; that stretch reads KDQ. Cysteine 201 acts as the Cysteine persulfide intermediate in catalysis. The interval 313–314 is interaction with tRNA; it reads RY.

This sequence belongs to the MnmA/TRMU family.

The protein resides in the cytoplasm. It catalyses the reaction S-sulfanyl-L-cysteinyl-[protein] + uridine(34) in tRNA + AH2 + ATP = 2-thiouridine(34) in tRNA + L-cysteinyl-[protein] + A + AMP + diphosphate + H(+). Its function is as follows. Catalyzes the 2-thiolation of uridine at the wobble position (U34) of tRNA, leading to the formation of s(2)U34. This is tRNA-specific 2-thiouridylase MnmA from Streptococcus equi subsp. equi (strain 4047).